The chain runs to 41 residues: U15-myrmicitoxin-Tb1b (41 aa).

The signal sequence occupies residues 1–25 (MKIVKLITIFAMIATLMVTVTNGEA). The residue at position 40 (His-40) is a Histidine amide.

As to expression, expressed by the venom gland.

The protein resides in the secreted. Functionally, venom protein with unknown function. Does not induce paralysis when a high dose is administered by intrathoracic injection into the blowfly Lucilia caesar. The polypeptide is U15-myrmicitoxin-Tb1b (Tetramorium bicarinatum (Tramp ant)).